The sequence spans 1463 residues: Probable oxidoreductase PXDNL (1463 aa).

The signal sequence occupies residues 1–23; the sequence is MEPRLFCWTTLFLLAGWCLPGLP. The 27-residue stretch at 24–50 folds into the LRRNT domain; sequence CPSRCLCFKSTVRCMHLMLDHIPQVPQ. 5 LRR repeats span residues 51–72, 75–96, 99–120, 123–144, and 147–168; these read QTTV…AFKK, NLNT…AFEG, NLLY…TFKG, SLEH…TFGD, and RLER…SFSN. The LRRCT domain maps to 180-233; sequence NALVCDCDLMWLGELLQGFAQHGHTQAAATCEYPRRLHGRAVASVTVEEFNCQS. Ig-like C2-type domains are found at residues 234–322, 330–414, 419–504, and 507–596; these read PRIT…AMLR, PSFV…ANII, PQFT…VQLT, and PKAL…MFLT. Intrachain disulfides connect cysteine 255/cysteine 305, cysteine 351/cysteine 398, cysteine 440/cysteine 488, cysteine 532/cysteine 580, and cysteine 718/cysteine 734. N-linked (GlcNAc...) asparagine glycosylation occurs at asparagine 387. Histidine 812 acts as the Proton acceptor in catalysis. Aspartate 813 contacts Ca(2+). Disulfide bonds link cysteine 832-cysteine 842 and cysteine 836-cysteine 859. Ca(2+)-binding residues include threonine 891, tyrosine 893, aspartate 895, and serine 897. The cysteines at positions 944 and 953 are disulfide-linked. Position 1057 (histidine 1057) interacts with heme b. Cystine bridges form between cysteine 1160–cysteine 1217 and cysteine 1258–cysteine 1284. One can recognise a VWFC domain in the interval 1393-1451; it reads AGCTDVRGVPRKAEERWMKEDCTHCICESGQVTCVVEICPPAPCPSPELVKGTCCPVCR.

This sequence belongs to the peroxidase family. XPO subfamily. In terms of assembly, interacts with PXDN; this interaction inhibits the peroxidase activity of PXDN. The cofactor is heme b. Phosphorylation by SRC on tyrosine residues is required for targeting to polysomes. As to expression, the 57 kDa isoform PMR1 is the only form detected at protein levels in human cell lines. Expressed in heart.

Its subcellular location is the secreted. It is found in the endoplasmic reticulum. The protein localises to the cell membrane. The protein resides in the cytoplasm. Functionally, probable oxidoreductase. Lacks peroxidase activity. Inhibits the peroxidase activity of PXDN through its interaction. Its function is as follows. Endonuclease selectively degrading some target mRNAs while they are engaged by translating ribosomes, among which albumin and beta-globin mRNAs. In Homo sapiens (Human), this protein is Probable oxidoreductase PXDNL.